A 635-amino-acid polypeptide reads, in one-letter code: Threonine--tRNA ligase (635 aa).

Residues 1–61 (MVSIRLPDGS…DRDASLAIVT (61 aa)) enclose the TGS domain. The catalytic stretch occupies residues 242–533 (DHRKLGKQLD…LIEHHAGAMP (292 aa)). The Zn(2+) site is built by Cys333, His384, and His510.

This sequence belongs to the class-II aminoacyl-tRNA synthetase family. As to quaternary structure, homodimer. Zn(2+) is required as a cofactor.

It is found in the cytoplasm. The enzyme catalyses tRNA(Thr) + L-threonine + ATP = L-threonyl-tRNA(Thr) + AMP + diphosphate + H(+). Its function is as follows. Catalyzes the attachment of threonine to tRNA(Thr) in a two-step reaction: L-threonine is first activated by ATP to form Thr-AMP and then transferred to the acceptor end of tRNA(Thr). Also edits incorrectly charged L-seryl-tRNA(Thr). The protein is Threonine--tRNA ligase of Burkholderia lata (strain ATCC 17760 / DSM 23089 / LMG 22485 / NCIMB 9086 / R18194 / 383).